A 489-amino-acid chain; its full sequence is N-succinylglutamate 5-semialdehyde dehydrogenase (489 aa).

223-228 is a binding site for NAD(+); it reads GSSRTG. Active-site residues include glutamate 246 and cysteine 280.

Belongs to the aldehyde dehydrogenase family. AstD subfamily.

The enzyme catalyses N-succinyl-L-glutamate 5-semialdehyde + NAD(+) + H2O = N-succinyl-L-glutamate + NADH + 2 H(+). It participates in amino-acid degradation; L-arginine degradation via AST pathway; L-glutamate and succinate from L-arginine: step 4/5. Catalyzes the NAD-dependent reduction of succinylglutamate semialdehyde into succinylglutamate. This is N-succinylglutamate 5-semialdehyde dehydrogenase from Aeromonas hydrophila subsp. hydrophila (strain ATCC 7966 / DSM 30187 / BCRC 13018 / CCUG 14551 / JCM 1027 / KCTC 2358 / NCIMB 9240 / NCTC 8049).